Reading from the N-terminus, the 151-residue chain is Cysteine proteinase inhibitor 10 (151 aa).

An N-terminal signal peptide occupies residues M1–G22. Residues G40–A109 enclose the Cystatin domain. The Secondary area of contact signature appears at Q96–G100.

It belongs to the cystatin family. Phytocystatin subfamily.

It localises to the secreted. Its function is as follows. Specific inhibitor of cysteine proteinases. Probably involved in the regulation of endogenous processes and in defense against pests and pathogens. The chain is Cysteine proteinase inhibitor 10 from Oryza sativa subsp. indica (Rice).